Reading from the N-terminus, the 260-residue chain is UPF0246 protein Cbei_1739 (260 aa).

This sequence belongs to the UPF0246 family.

This chain is UPF0246 protein Cbei_1739, found in Clostridium beijerinckii (strain ATCC 51743 / NCIMB 8052) (Clostridium acetobutylicum).